The sequence spans 376 residues: Nuclear egress protein 1 (376 aa).

Ser19 is subject to Phosphoserine. Residues 22-57 form a disordered region; the sequence is RKRRQRELASKVASTVNGATSANNHGEPPSPADARP. Residues 33 to 45 show a composition bias toward polar residues; the sequence is VASTVNGATSANN. Residues 106-211 form a CCCH-type zinc finger; it reads CLDISPYGNE…HVIFENSDVH (106 aa). Residues 316-376 form a disordered region; it reads VVSTNGCGPS…PLFLNSIRAP (61 aa). The span at 317–332 shows a compositional bias: polar residues; the sequence is VSTNGCGPSSSSQSTP.

The protein belongs to the herpesviridae NEC1 protein family. As to quaternary structure, forms a heterohexameric complex with NEC2. Interacts with capsid vertex specific component 2/CVC2; this interaction directs the capsid to the host inner nuclear membrane to initiate budding. Phosphorylated at serine residues in the N-terminus. This phosphorylation regulates the localization within the inner nuclear membrane. Phosphorylation by viral kinase UL97 at Ser-19 plays an important role for correct viral nuclear egress complex (NEC) localization.

The protein resides in the host nucleus inner membrane. In terms of biological role, plays an essential role in virion nuclear egress, the first step of virion release from infected cell. Within the host nucleus, NEC1 interacts with the newly formed capsid through the vertexes and directs it to the inner nuclear membrane by associating with NEC2. Induces the budding of the capsid at the inner nuclear membrane as well as its envelopment into the perinuclear space. There, the NEC1/NEC2 complex promotes the fusion of the enveloped capsid with the outer nuclear membrane and the subsequent release of the viral capsid into the cytoplasm where it will reach the secondary budding sites in the host Golgi or trans-Golgi network. This Homo sapiens (Human) protein is Nuclear egress protein 1.